The primary structure comprises 521 residues: Cytochrome P450 1A1 (521 aa).

Phe229 provides a ligand contact to substrate. Heme is bound at residue Cys463.

It belongs to the cytochrome P450 family. It depends on heme as a cofactor.

Its subcellular location is the endoplasmic reticulum membrane. It localises to the microsome membrane. The enzyme catalyses an organic molecule + reduced [NADPH--hemoprotein reductase] + O2 = an alcohol + oxidized [NADPH--hemoprotein reductase] + H2O + H(+). Cytochromes P450 are a group of heme-thiolate monooxygenases. They oxidize a variety of structurally unrelated compounds, including steroids, fatty acids, and xenobiotics. The protein is Cytochrome P450 1A1 (cyp1a1) of Pleuronectes platessa (European plaice).